Reading from the N-terminus, the 88-residue chain is Small ribosomal subunit protein bS20 (88 aa).

Residues 1 to 28 are disordered; the sequence is MANIKSQIKRNKTNEKARLRNKAVKSSL.

The protein belongs to the bacterial ribosomal protein bS20 family.

In terms of biological role, binds directly to 16S ribosomal RNA. The protein is Small ribosomal subunit protein bS20 of Streptomyces avermitilis (strain ATCC 31267 / DSM 46492 / JCM 5070 / NBRC 14893 / NCIMB 12804 / NRRL 8165 / MA-4680).